Here is a 356-residue protein sequence, read N- to C-terminus: Protein-glutamate methylesterase/protein-glutamine glutaminase 2 (356 aa).

Residues 4 to 121 (KVLIVDDSAV…KGFLEESSHE (118 aa)) enclose the Response regulatory domain. Aspartate 55 is modified (4-aspartylphosphate). The 188-residue stretch at 169–356 (FATTERIIAI…LELIAKAICR (188 aa)) folds into the CheB-type methylesterase domain. Catalysis depends on residues serine 181, histidine 207, and aspartate 303.

The protein belongs to the CheB family. In terms of processing, phosphorylated by CheA. Phosphorylation of the N-terminal regulatory domain activates the methylesterase activity.

The protein localises to the cytoplasm. It carries out the reaction [protein]-L-glutamate 5-O-methyl ester + H2O = L-glutamyl-[protein] + methanol + H(+). The catalysed reaction is L-glutaminyl-[protein] + H2O = L-glutamyl-[protein] + NH4(+). In terms of biological role, involved in chemotaxis. Part of a chemotaxis signal transduction system that modulates chemotaxis in response to various stimuli. Catalyzes the demethylation of specific methylglutamate residues introduced into the chemoreceptors (methyl-accepting chemotaxis proteins or MCP) by CheR. Also mediates the irreversible deamidation of specific glutamine residues to glutamic acid. The polypeptide is Protein-glutamate methylesterase/protein-glutamine glutaminase 2 (Chromobacterium violaceum (strain ATCC 12472 / DSM 30191 / JCM 1249 / CCUG 213 / NBRC 12614 / NCIMB 9131 / NCTC 9757 / MK)).